The sequence spans 157 residues: Small ribosomal subunit protein uS7 (157 aa).

The protein belongs to the universal ribosomal protein uS7 family. As to quaternary structure, part of the 30S ribosomal subunit. Contacts proteins S9 and S11.

One of the primary rRNA binding proteins, it binds directly to 16S rRNA where it nucleates assembly of the head domain of the 30S subunit. Is located at the subunit interface close to the decoding center, probably blocks exit of the E-site tRNA. The polypeptide is Small ribosomal subunit protein uS7 (Delftia acidovorans (strain DSM 14801 / SPH-1)).